The following is a 154-amino-acid chain: Large ribosomal subunit protein uL13 (154 aa).

The protein belongs to the universal ribosomal protein uL13 family. Part of the 50S ribosomal subunit.

This protein is one of the early assembly proteins of the 50S ribosomal subunit, although it is not seen to bind rRNA by itself. It is important during the early stages of 50S assembly. The polypeptide is Large ribosomal subunit protein uL13 (Brucella anthropi (strain ATCC 49188 / DSM 6882 / CCUG 24695 / JCM 21032 / LMG 3331 / NBRC 15819 / NCTC 12168 / Alc 37) (Ochrobactrum anthropi)).